Consider the following 73-residue polypeptide: ComX pheromone (73 aa).

The propeptide occupies 1 to 52; it reads MKHIDKIISHLVNNPEAFDQFKNGNLTLLNINEKEKKAILYAFEQGEVPRTS. Residue W54 is the site of 3'-farnesyl-2',N2-cyclotryptophan attachment. The propeptide occupies 59 to 73; sequence AISNFFEDDKRKSLI.

Interacts directly with the sensor histidine kinase ComP and stimulates its activity. Post-translationally, trp-54 is modified by farnesylation, which is essential for activity. Modified by the tryptophan prenyltransferase ComQ before export to the extracellular environment.

The protein localises to the secreted. Its function is as follows. Part of a major quorum-sensing system that regulates the development of genetic competence. Acts through the activation of the two-component regulatory system ComP/ComA composed of a sensor histidine kinase, ComP, and a response regulator, ComA. Activates the expression of the genes for biosynthesis of poly-gamma-glutamic acid (gamma-PGA), which is involved in biofilm formation in B.subtilis natto. The polypeptide is ComX pheromone (Bacillus subtilis subsp. natto (strain BEST195)).